The chain runs to 232 residues: Phosphate-specific transport system accessory protein PhoU homolog 1 (232 aa).

This sequence belongs to the PhoU family. Homodimer.

The protein localises to the cytoplasm. Its function is as follows. Plays a role in the regulation of phosphate uptake. The polypeptide is Phosphate-specific transport system accessory protein PhoU homolog 1 (phoU1) (Thermotoga maritima (strain ATCC 43589 / DSM 3109 / JCM 10099 / NBRC 100826 / MSB8)).